We begin with the raw amino-acid sequence, 145 residues long: Probable D-aminoacyl-tRNA deacylase (145 aa).

This sequence belongs to the DTD family. Homodimer.

The protein localises to the cytoplasm. The catalysed reaction is glycyl-tRNA(Ala) + H2O = tRNA(Ala) + glycine + H(+). The enzyme catalyses a D-aminoacyl-tRNA + H2O = a tRNA + a D-alpha-amino acid + H(+). Functionally, an aminoacyl-tRNA editing enzyme that deacylates mischarged D-aminoacyl-tRNAs. Also deacylates mischarged glycyl-tRNA(Ala), protecting cells against glycine mischarging by AlaRS. Acts via tRNA-based rather than protein-based catalysis; rejects L-amino acids rather than detecting D-amino acids in the active site. By recycling D-aminoacyl-tRNA to D-amino acids and free tRNA molecules, this enzyme counteracts the toxicity associated with the formation of D-aminoacyl-tRNA entities in vivo and helps enforce protein L-homochirality. The chain is Probable D-aminoacyl-tRNA deacylase from Shigella flexneri serotype 5b (strain 8401).